The following is a 257-amino-acid chain: Large ribosomal subunit protein uL3 (257 aa).

A disordered region spans residues 232–257 (LKAPKKQKTKVETNQVNPKIEEEKTK).

It belongs to the universal ribosomal protein uL3 family. In terms of assembly, part of the 50S ribosomal subunit. Forms a cluster with proteins L14 and L19.

In terms of biological role, one of the primary rRNA binding proteins, it binds directly near the 3'-end of the 23S rRNA, where it nucleates assembly of the 50S subunit. The sequence is that of Large ribosomal subunit protein uL3 from Mycoplasma genitalium (strain ATCC 33530 / DSM 19775 / NCTC 10195 / G37) (Mycoplasmoides genitalium).